A 445-amino-acid chain; its full sequence is MSEYLSVTSLTKYIKYKFDQDPHLQSVLIKGELSNFKKHSSGHLYFNVKDKNSVISAMMFKGNASKIDFEPKEGDEVLLEARVSVYERRGNYQIYVNKMHMDGIGNLYQKLEQLKKKLTKEGFFDQNHKKVIPKFPQKIAVLTAGTGAAIRDIHTTINSRYPLAEQVQINTLVQGEQAKSDIIEKINQADALNVDTIIIGRGGGSIEDLWNFNEEDVVKAIYNCQTPIISAVGHETDFTLSDFVADVRAATPTQAAVMATPDQYELRQYLQQANLSLTRFIKQYMQQKRKHLEHVASYYKFQTPSLLYDQQIQKRDDLEKQLKLSLNLKIKNQQQQLQLLFNNFNLKTFKQRIKRDQLTNNQKRVELSKVMHNLLDNQKNNLARKLENLNNLSPTNTMLRGYTIVNKDDKVITSTKDLAENDNIVLTMKDGVVDAQVKKVRCNDE.

The protein belongs to the XseA family. As to quaternary structure, heterooligomer composed of large and small subunits.

The protein localises to the cytoplasm. It carries out the reaction Exonucleolytic cleavage in either 5'- to 3'- or 3'- to 5'-direction to yield nucleoside 5'-phosphates.. Its function is as follows. Bidirectionally degrades single-stranded DNA into large acid-insoluble oligonucleotides, which are then degraded further into small acid-soluble oligonucleotides. The sequence is that of Exodeoxyribonuclease 7 large subunit from Staphylococcus saprophyticus subsp. saprophyticus (strain ATCC 15305 / DSM 20229 / NCIMB 8711 / NCTC 7292 / S-41).